A 261-amino-acid polypeptide reads, in one-letter code: uncharacterized protein (261 aa).

The next 6 helical transmembrane spans lie at 31-51 (TFLS…TGIV), 71-91 (TNVM…SWLL), 101-121 (LAYI…AGIA), 130-150 (LTSS…ASFI), 167-187 (LLLF…IPYV), and 213-233 (FAWL…YLAI).

The protein resides in the cell membrane. This is an uncharacterized protein from Mycoplasma genitalium (strain ATCC 33530 / DSM 19775 / NCTC 10195 / G37) (Mycoplasmoides genitalium).